A 247-amino-acid polypeptide reads, in one-letter code: Ribosomal RNA processing protein 36 homolog (247 aa).

Disordered stretches follow at residues 1 to 29 (MDNQ…HLKD), 62 to 89 (RTQG…QRVP), 136 to 188 (SVEK…RELV), and 218 to 247 (GKLQ…QVDQ). Residues 8–23 (SSDDESPTDDCSDEGE) are compositionally biased toward acidic residues. 2 stretches are compositionally biased toward basic and acidic residues: residues 136–153 (SVEK…RKNL) and 164–174 (ERSRKSAEAKR). The span at 218 to 240 (GKLQKYLTKRRKKTASKDRRHVP) shows a compositional bias: basic residues.

It belongs to the RRP36 family.

The protein localises to the nucleus. Its subcellular location is the nucleolus. Its function is as follows. Involved in the early processing steps of the pre-rRNA in the maturation pathway leading to the 18S rRNA. In Nematostella vectensis (Starlet sea anemone), this protein is Ribosomal RNA processing protein 36 homolog.